The following is a 308-amino-acid chain: Apolipoprotein E (308 aa).

The signal sequence occupies residues 1-18 (MKFLWAALVVTLLAGCRA). 8 consecutive repeat copies span residues 75-96 (LLIE…KQVG), 97-118 (PIAQ…ARLE), 119-140 (SDME…AALG), 141-162 (QNTD…KRLL), 163-184 (RDAE…EAAE), 185-206 (RGVS…LQAI), 207-224 (PPSQ…QKVR), and 225-246 (GRLE…DQME). The 8 X 22 AA approximate tandem repeats stretch occupies residues 75–246 (LLIEETMKEV…RLDDMRDQME (172 aa)). An LDL and other lipoprotein receptors binding region spans residues 153 to 163 (HLRKLRKRLLR). 157–160 (LRKR) is a binding site for heparin. A lipid-binding and lipoprotein association region spans residues 205 to 281 (AIPPSQQLRE…SWFEPLVQDM (77 aa)). Residue 220-227 (GQKVRGRL) participates in heparin binding. The interval 257-308 (SQVRLQAEAFQTRLKSWFEPLVQDMQRQWASLVEKVQSTLGISPSTKPSKTK) is homooligomerization. Positions 269–281 (RLKSWFEPLVQDM) are specificity for association with VLDL.

It belongs to the apolipoprotein A1/A4/E family. As to quaternary structure, homotetramer. May interact with ABCA1; functionally associated with ABCA1 in the biogenesis of HDLs. May interact with APP/A4 amyloid-beta peptide; the interaction is extremely stable in vitro but its physiological significance is unclear. May interact with MAPT. May interact with MAP2. In the cerebrospinal fluid, interacts with secreted SORL1. Interacts with PMEL; this allows the loading of PMEL luminal fragment on ILVs to induce fibril nucleation. Post-translationally, APOE exists as multiple glycosylated and sialylated glycoforms within cells and in plasma. The extent of glycosylation and sialylation are tissue and context specific. Glycated in plasma VLDL. In terms of processing, phosphorylated by FAM20C in the extracellular medium.

It localises to the secreted. The protein localises to the extracellular space. Its subcellular location is the extracellular matrix. The protein resides in the extracellular vesicle. It is found in the endosome. It localises to the multivesicular body. Its function is as follows. APOE is an apolipoprotein, a protein associating with lipid particles, that mainly functions in lipoprotein-mediated lipid transport between organs via the plasma and interstitial fluids. APOE is a core component of plasma lipoproteins and is involved in their production, conversion and clearance. Apolipoproteins are amphipathic molecules that interact both with lipids of the lipoprotein particle core and the aqueous environment of the plasma. As such, APOE associates with chylomicrons, chylomicron remnants, very low density lipoproteins (VLDL) and intermediate density lipoproteins (IDL) but shows a preferential binding to high-density lipoproteins (HDL). It also binds a wide range of cellular receptors including the LDL receptor/LDLR and the very low-density lipoprotein receptor/VLDLR that mediate the cellular uptake of the APOE-containing lipoprotein particles. Finally, APOE also has a heparin-binding activity and binds heparan-sulfate proteoglycans on the surface of cells, a property that supports the capture and the receptor-mediated uptake of APOE-containing lipoproteins by cells. The polypeptide is Apolipoprotein E (APOE) (Pteropus pselaphon (Bonin flying fox)).